We begin with the raw amino-acid sequence, 204 residues long: Secreted phosphoprotein 24 (204 aa).

The N-terminal stretch at 1–23 (MEKRAMRMLAMFVLGTSFWSCAG) is a signal peptide. Disulfide bonds link cysteine 86-cysteine 97 and cysteine 110-cysteine 128. The residue at position 90 (serine 90) is a Phosphoserine. Phosphoserine is present on residues serine 138, serine 139, serine 166, and serine 175. Residues 179–204 (MRRFPPPGNRSFPNQWPRARTNTGFE) are disordered.

Belongs to the SPP2 family. Multiply phosphorylated at serine residues. Post-translationally, phosphorylation sites are present in the extracellular medium.

Its subcellular location is the secreted. Could coordinate an aspect of bone turnover. The protein is Secreted phosphoprotein 24 (SPP2) of Sus scrofa (Pig).